Consider the following 369-residue polypeptide: Anhydro-N-acetylmuramic acid kinase (369 aa).

Gly-12–Asp-19 serves as a coordination point for ATP.

It belongs to the anhydro-N-acetylmuramic acid kinase family.

The catalysed reaction is 1,6-anhydro-N-acetyl-beta-muramate + ATP + H2O = N-acetyl-D-muramate 6-phosphate + ADP + H(+). It functions in the pathway amino-sugar metabolism; 1,6-anhydro-N-acetylmuramate degradation. It participates in cell wall biogenesis; peptidoglycan recycling. Catalyzes the specific phosphorylation of 1,6-anhydro-N-acetylmuramic acid (anhMurNAc) with the simultaneous cleavage of the 1,6-anhydro ring, generating MurNAc-6-P. Is required for the utilization of anhMurNAc either imported from the medium or derived from its own cell wall murein, and thus plays a role in cell wall recycling. The chain is Anhydro-N-acetylmuramic acid kinase from Escherichia coli O8 (strain IAI1).